We begin with the raw amino-acid sequence, 396 residues long: Acetate kinase (396 aa).

Asn-7 is a Mg(2+) binding site. Lys-14 contributes to the ATP binding site. Arg-86 provides a ligand contact to substrate. Asp-143 serves as the catalytic Proton donor/acceptor. ATP is bound by residues 203–207 (HLGNG), 277–279 (DMR), and 325–329 (GIGEH). A Mg(2+)-binding site is contributed by Glu-380.

Belongs to the acetokinase family. As to quaternary structure, homodimer. Mg(2+) serves as cofactor. Requires Mn(2+) as cofactor.

Its subcellular location is the cytoplasm. The enzyme catalyses acetate + ATP = acetyl phosphate + ADP. It functions in the pathway metabolic intermediate biosynthesis; acetyl-CoA biosynthesis; acetyl-CoA from acetate: step 1/2. Functionally, catalyzes the formation of acetyl phosphate from acetate and ATP. Can also catalyze the reverse reaction. This chain is Acetate kinase, found in Sulfurovum sp. (strain NBC37-1).